Reading from the N-terminus, the 319-residue chain is Thioredoxin reductase (319 aa).

37–44 contributes to the FAD binding site; the sequence is ERGVPGGQ. Cysteines 136 and 139 form a disulfide. 279 to 288 serves as a coordination point for FAD; sequence DVRAKSLRQI.

Belongs to the class-II pyridine nucleotide-disulfide oxidoreductase family. As to quaternary structure, homodimer. FAD is required as a cofactor.

It is found in the cytoplasm. It catalyses the reaction [thioredoxin]-dithiol + NADP(+) = [thioredoxin]-disulfide + NADPH + H(+). The chain is Thioredoxin reductase (trxB) from Listeria monocytogenes serovar 1/2a (strain ATCC BAA-679 / EGD-e).